The primary structure comprises 309 residues: Tumor necrosis factor ligand superfamily member 9 (309 aa).

The span at 1–16 shows a compositional bias: basic and acidic residues; that stretch reads MDQHTLDVEDTADARH. Residues 1–20 form a disordered region; that stretch reads MDQHTLDVEDTADARHPAGT. Topologically, residues 1 to 82 are cytoplasmic; it reads MDQHTLDVED…ALNFCSRHPK (82 aa). A helical; Signal-anchor for type II membrane protein transmembrane segment spans residues 83–103; that stretch reads LYGLVALVLLLLIAACVPIFT. At 104–309 the chain is on the extracellular side; it reads RTEPRPALTI…FLVKPDNPWE (206 aa). 3 N-linked (GlcNAc...) asparagine glycosylation sites follow: N139, N161, and N293. The THD domain occupies 147-302; that stretch reads VFAKLLAKNQ…NTTSFGLFLV (156 aa).

The protein belongs to the tumor necrosis factor family. As to quaternary structure, homotrimer.

It is found in the membrane. In terms of biological role, cytokine that binds to TNFRSF9. Induces the proliferation of activated peripheral blood T-cells. May have a role in activation-induced cell death (AICD). May play a role in cognate interactions between T-cells and B-cells/macrophages. In Mus musculus (Mouse), this protein is Tumor necrosis factor ligand superfamily member 9 (Tnfsf9).